The chain runs to 383 residues: UDP-D-xylose:L-fucose alpha-1,3-D-xylosyltransferase 3 (383 aa).

Residues 1–20 (MAQQSQRPISNRHISLLNRN) are Cytoplasmic-facing. Residues 21-41 (GLILLLLLALFVILGVFLPLT) traverse the membrane as a helical; Signal-anchor for type II membrane protein segment. Residues 42–383 (KSSLFMFPNT…KNRGKKHKLP (342 aa)) lie on the Lumenal side of the membrane. Asparagine 50, asparagine 82, and asparagine 157 each carry an N-linked (GlcNAc...) asparagine glycan. Residues 180–182 (DVD) carry the DXD motif motif. Residues asparagine 212, asparagine 258, asparagine 301, asparagine 306, asparagine 357, and asparagine 364 are each glycosylated (N-linked (GlcNAc...) asparagine).

The protein belongs to the glycosyltransferase 77 family. Mn(2+) is required as a cofactor. It depends on Mg(2+) as a cofactor. In terms of processing, glycosylated. In terms of tissue distribution, expressed around trichome support cells in the adaxial epidermis of rosette leaves, in cauline leaves, petals and both the proximal and distal ends of siliques.

It is found in the golgi apparatus membrane. In terms of biological role, catalyzes the transfer of D-xylose from UDP-alpha-D-xylose onto L-fucose. Probably involved in the biosynthesis of rhamnogalacturonan II (RG-II) through xylosylation of the internal fucose moiety of the A-chain of RG-II, a structurally complex pectic polysaccharide of the primary cell wall. RG-II is essential for the cell wall integrity of rapidly growing tissues such as roots and pollen tube growth and elongation. The protein is UDP-D-xylose:L-fucose alpha-1,3-D-xylosyltransferase 3 of Arabidopsis thaliana (Mouse-ear cress).